The sequence spans 538 residues: Putative amidase kk1C (538 aa).

The interval Met-1–His-32 is disordered. Active-site charge relay system residues include Lys-134 and Ser-209. The active-site Acyl-ester intermediate is Ser-233.

Belongs to the amidase family.

It catalyses the reaction a monocarboxylic acid amide + H2O = a monocarboxylate + NH4(+). Its pathway is secondary metabolite biosynthesis. Functionally, putative amidase; part of the gene cluster that mediates the biosynthesis of KK-1, a novel cyclic depsipeptide with 10 residues which is a promising active compound with high activity against many plant pathogens, especially Botrytis cinerea. The role of kk1C in KK-1 biosynthesis has still to be determined. The nonribosomal peptide synthetase (NRPS) kk1B catalyzes the elongation and cyclization of the decapeptide chain composed of 1 D-lactic acid residue (D-Lac), 1 pipecolic acid residue (Pip), 1 aspartic acid residue (Asp), 1 isoleucine residue (Ile), 1 glycine residue (Gly), 1 tyrosine residue (Tyr) and 4 valine residues (Val). The Asp, Ile and 3 Val residues are N-methylated by the 5 methyltransferase domains from the NRPS (found in modules 3, 5, 6, 7 and 9), whereas the Tyr residue is O-methylated by the cluster encoded O-methyltransferase kk1A. The thioesterase kk1J is likely to be involved in the corrective mechanism of peptide chain synthesis. The D-lactate dehydrogenase kk1H is involved in the synthesis of D-lactic acid from pyruvic acid, which is recognized by the A domain of the first kk1B module. The pyrroline-5-carboxylate reductase kk1I is involved in the synthesis of the L-pipecolic acid residue of KK-1 from delta-1-pyrroline-5-carboxylate (P5C), a metabolic intermediate of lysine. It is still unclear how kk1C and kk1D are involved in the production of KK-1. The chain is Putative amidase kk1C from Curvularia clavata.